Here is a 71-residue protein sequence, read N- to C-terminus: Small, acid-soluble spore protein 2 (71 aa).

Belongs to the alpha/beta-type SASP family.

In terms of biological role, SASP are bound to spore DNA. They are double-stranded DNA-binding proteins that cause DNA to change to an a-like conformation. They protect the DNA backbone from chemical and enzymatic cleavage and are thus involved in dormant spore's high resistance to UV light. This chain is Small, acid-soluble spore protein 2, found in Bacillus subtilis.